Reading from the N-terminus, the 342-residue chain is Signal-regulatory protein beta-2 (342 aa).

Residues 1 to 32 (MCSTMSAPTCLAHLPPCFLLLALVLVPSDASG) form the signal peptide. Ig-like V-type domains lie at 33–143 (QSSR…KSDE) and 157–258 (PDLW…SGQG). Topologically, residues 33-287 (QSSRNDWQVL…EPATEMSPTG (255 aa)) are extracellular. A disulfide bridge links Cys-60 with Cys-127. Residues Asn-116, Asn-179, and Asn-231 are each glycosylated (N-linked (GlcNAc...) asparagine). A disulfide bridge links Cys-180 with Cys-242. Residues 288 to 308 (LLVVFAPVVLGLKAITLAALL) traverse the membrane as a helical segment. At 309–342 (LALATSRRSPGQEDVKTTGPAGAMNTLAWSKGQE) the chain is on the cytoplasmic side. Residues 317-342 (SPGQEDVKTTGPAGAMNTLAWSKGQE) form a disordered region.

Its subcellular location is the membrane. This is Signal-regulatory protein beta-2 (SIRPB2) from Homo sapiens (Human).